A 156-amino-acid chain; its full sequence is Methylated-DNA--protein-cysteine methyltransferase (156 aa).

Cys120 acts as the Nucleophile; methyl group acceptor in catalysis.

It belongs to the MGMT family.

The protein localises to the cytoplasm. It carries out the reaction a 6-O-methyl-2'-deoxyguanosine in DNA + L-cysteinyl-[protein] = S-methyl-L-cysteinyl-[protein] + a 2'-deoxyguanosine in DNA. The enzyme catalyses a 4-O-methyl-thymidine in DNA + L-cysteinyl-[protein] = a thymidine in DNA + S-methyl-L-cysteinyl-[protein]. Functionally, involved in the cellular defense against the biological effects of O6-methylguanine (O6-MeG) and O4-methylthymine (O4-MeT) in DNA. Repairs the methylated nucleobase in DNA by stoichiometrically transferring the methyl group to a cysteine residue in the enzyme. This is a suicide reaction: the enzyme is irreversibly inactivated. This chain is Methylated-DNA--protein-cysteine methyltransferase, found in Metallosphaera sedula (strain ATCC 51363 / DSM 5348 / JCM 9185 / NBRC 15509 / TH2).